The primary structure comprises 103 residues: Large ribosomal subunit protein eL30 (103 aa).

It belongs to the eukaryotic ribosomal protein eL30 family.

In Methanosarcina mazei (strain ATCC BAA-159 / DSM 3647 / Goe1 / Go1 / JCM 11833 / OCM 88) (Methanosarcina frisia), this protein is Large ribosomal subunit protein eL30.